The chain runs to 512 residues: Glutathione-binding protein GsiB (512 aa).

A signal peptide spans 1-26 (MARAVHRSGLVALGIATALMASCAFA).

This sequence belongs to the bacterial solute-binding protein 5 family. As to quaternary structure, the complex is composed of two ATP-binding proteins (GsiA), two transmembrane proteins (GsiC and GsiD) and a solute-binding protein (GsiB).

Its subcellular location is the periplasm. In terms of biological role, part of the ABC transporter complex GsiABCD involved in glutathione import. Binds glutathione. The chain is Glutathione-binding protein GsiB from Shigella boydii serotype 4 (strain Sb227).